Reading from the N-terminus, the 1434-residue chain is Probable ATP-dependent RNA helicase spindle-E (1434 aa).

The Helicase ATP-binding domain maps to 126-295; sequence INAINENPVV…FANESSAPPV (170 aa). Position 139 to 146 (139 to 146) interacts with ATP; the sequence is GETGCGKT. The DEAH box signature appears at 241–244; it reads DEVH. The Helicase C-terminal domain maps to 356–527; sequence TGKSYNQSLR…NCVLKAKELK (172 aa). Residues 936–999 form the Tudor domain; it reads AGAITKGLML…RLMSQDLLRH (64 aa).

Belongs to the DEAD box helicase family. DEAH subfamily.

The protein resides in the cytoplasm. It catalyses the reaction ATP + H2O = ADP + phosphate + H(+). Functionally, probable ATP-binding RNA helicase which plays a central role during spermatogenesis and oogenesis by repressing transposable elements and preventing their mobilization, which is essential for the germline integrity. Acts via the piRNA metabolic process, which mediates the repression of transposable elements during meiosis by forming complexes composed of piRNAs and Piwi and govern the methylation and subsequent repression of transposons. Involved in the repression of LTR retrotransposon copia. Also involved in telomere regulation by repressing specialized telomeric retroelements HeT-A, TAHRE, and TART; Drosophila telomeres being maintained by transposition of specialized telomeric retroelements. Involved in telomeric trans-silencing, a repression mechanism by which a transposon or a transgene inserted in subtelomeric heterochromatin has the capacity to repress in trans in the female germline, a homologous transposon, or transgene located in euchromatin. Involved in the repression of testis-expressed Stellate genes by the homologous Su(Ste) repeats. Required for anteroposterior and dorsoventral axis formation during oogenesis. This is Probable ATP-dependent RNA helicase spindle-E (spn-E) from Drosophila persimilis (Fruit fly).